The following is a 403-amino-acid chain: Glucosyl-3-phosphoglycerate synthase (403 aa).

D150 serves as a coordination point for a divalent metal cation. Position 189 to 192 (189 to 192 (GRVT)) interacts with (2R)-3-phosphoglycerate. H273 serves as a coordination point for a divalent metal cation.

Belongs to the glycosyltransferase 2 family. In terms of assembly, homodimer. Mn(2+) serves as cofactor. It depends on Co(2+) as a cofactor. The cofactor is Mg(2+). Requires Ni(2+) as cofactor.

It carries out the reaction an NDP-alpha-D-glucose + (2R)-3-phosphoglycerate = (2R)-2-O-(alpha-D-glucopyranosyl)-3-phospho-glycerate + a ribonucleoside 5'-diphosphate + H(+). In terms of biological role, involved in the biosynthesis of 6-O-methylglucose lipopolysaccarides (MGLPs). Catalyzes the transfer of a glucose (Glc) moiety from uridine diphosphate (UDP-Glc) to the position 2 of 3-phospho-D-glycerate (3-PGA) to form glucosyl-3-phosphoglycerate (GPG). GpgS is most active with UDP-glucose, followed by GDP-glucose, ADP-glucose, and to a lesser extent, TDP-glucose. 3-PGA is the only acceptor for these glucosyl donors. This is Glucosyl-3-phosphoglycerate synthase from Persephonella marina (strain DSM 14350 / EX-H1).